Here is a 127-residue protein sequence, read N- to C-terminus: Putative histone H3.3-like type 3 (127 aa).

Residues Lys6 and Lys15 each carry the N6-acetyllysine modification. N6-methylated lysine occurs at positions 19, 28, and 71.

This sequence belongs to the histone H3 family. In terms of assembly, the nucleosome is a histone octamer containing two molecules each of H2A, H2B, H3 and H4 assembled in one H3-H4 heterotetramer and two H2A-H2B heterodimers. The octamer wraps approximately 147 bp of DNA. In terms of processing, acetylation is generally linked to gene activation.

It localises to the nucleus. The protein localises to the chromosome. Its function is as follows. Putative variant histone H3 which may replace conventional H3 in a subset of nucleosomes. Nucleosomes wrap and compact DNA into chromatin, limiting DNA accessibility to the cellular machineries which require DNA as a template. Histones thereby play a central role in transcription regulation, DNA repair, DNA replication and chromosomal stability. DNA accessibility is regulated via a complex set of post-translational modifications of histones, also called histone code, and nucleosome remodeling. In Caenorhabditis elegans, this protein is Putative histone H3.3-like type 3 (his-69).